The sequence spans 435 residues: MDFNIEEVSAVEREIKVSVPAEEVGAALDATVALYKVQTPVKGFRKGKVPASVIQSKYKKQIINEATTDLINYQINDILNGQSLVPVSKIDVDAKELVRGEDFSYVIKFEIVPEFDTPGYLGLPVEEERAEVTEDELKEVENRLLQSMAKIAPIEDDRPAKDGELASVTFSAEMDGEPIPGVQADNFDLPIGEGHSLEEFEEFVKTLKAGESGETDITFPEDFINSDLAGKTATMKVTVHAVKERKMPELTDDVVKQAGGFESVEKMREIVKQSYTANRKQLNKSAAQTKLISGIVKELDFPLPPSLMEDRLQRMVADVIGRAERSGKSFESLGKSMEELREEQRPVAEESVRTEIFLLNVAKREELSVEPQEVEGALYQIAQQTQQDLSSVKSYYEENNLIVPLKDRLLADKAAEFIYENADVTEIDPVKKDDK.

The PPIase FKBP-type domain maps to 163–248; sequence GELASVTFSA…VHAVKERKMP (86 aa).

This sequence belongs to the FKBP-type PPIase family. Tig subfamily.

The protein localises to the cytoplasm. It carries out the reaction [protein]-peptidylproline (omega=180) = [protein]-peptidylproline (omega=0). Involved in protein export. Acts as a chaperone by maintaining the newly synthesized protein in an open conformation. Functions as a peptidyl-prolyl cis-trans isomerase. In Maridesulfovibrio salexigens (strain ATCC 14822 / DSM 2638 / NCIMB 8403 / VKM B-1763) (Desulfovibrio salexigens), this protein is Trigger factor.